A 324-amino-acid chain; its full sequence is Serine/threonine-protein phosphatase PP1 isozyme 8 (324 aa).

Positions 66, 68, 94, and 126 each coordinate Mn(2+). H127 serves as the catalytic Proton donor. Residues H175 and H250 each contribute to the Mn(2+) site.

It belongs to the PPP phosphatase family. PP-1 subfamily. Mn(2+) is required as a cofactor. As to expression, expressed in roots, rosettes and flowers.

Its subcellular location is the nucleus. The protein localises to the cytoplasm. It carries out the reaction O-phospho-L-seryl-[protein] + H2O = L-seryl-[protein] + phosphate. The catalysed reaction is O-phospho-L-threonyl-[protein] + H2O = L-threonyl-[protein] + phosphate. With respect to regulation, phosphatase activity is strongly reduced by the protein phosphatase inhibitor 2 (I-2). Serine/threonine-protein phosphatase that possesses phosphatase activity toward para-nitrophenyl phosphate (pNPP) in vitro. The protein is Serine/threonine-protein phosphatase PP1 isozyme 8 of Arabidopsis thaliana (Mouse-ear cress).